Consider the following 163-residue polypeptide: Glyoxalase domain-containing protein 5 (163 aa).

Residues 41–161 form the VOC domain; that stretch reads HLDHLVLTVR…DDNLIEVSNY (121 aa).

It belongs to the glyoxalase I family.

The protein is Glyoxalase domain-containing protein 5 (glod5) of Danio rerio (Zebrafish).